The sequence spans 431 residues: COBRA-like protein 4 (431 aa).

Residues 1 to 20 (MRLLFSFCFFFFMIIFTATA) form the signal peptide. 8 N-linked (GlcNAc...) asparagine glycosylation sites follow: Asn-29, Asn-154, Asn-162, Asn-201, Asn-226, Asn-306, Asn-321, and Asn-340. Asn-414 is lipidated: GPI-anchor amidated asparagine. Residues 415 to 431 (FASFSLTILLLLFISIW) constitute a propeptide, removed in mature form.

It belongs to the COBRA family. In terms of tissue distribution, expressed in roots, stems, leaves, flowers and siliques.

The protein resides in the cell membrane. The sequence is that of COBRA-like protein 4 (COBL4) from Arabidopsis thaliana (Mouse-ear cress).